The chain runs to 398 residues: Succinate--CoA ligase [ADP-forming] subunit beta (398 aa).

An ATP-grasp domain is found at 9–254 (KAVLREFGVS…ETEEDAKEIE (246 aa)). ATP is bound by residues Lys-46, 53–55 (GRG), Glu-109, Ala-112, and Glu-117. Positions 209 and 223 each coordinate Mg(2+). Substrate contacts are provided by residues Asn-274 and 331-333 (GIM).

The protein belongs to the succinate/malate CoA ligase beta subunit family. As to quaternary structure, heterotetramer of two alpha and two beta subunits. Mg(2+) serves as cofactor.

The catalysed reaction is succinate + ATP + CoA = succinyl-CoA + ADP + phosphate. It carries out the reaction GTP + succinate + CoA = succinyl-CoA + GDP + phosphate. It participates in carbohydrate metabolism; tricarboxylic acid cycle; succinate from succinyl-CoA (ligase route): step 1/1. Its function is as follows. Succinyl-CoA synthetase functions in the citric acid cycle (TCA), coupling the hydrolysis of succinyl-CoA to the synthesis of either ATP or GTP and thus represents the only step of substrate-level phosphorylation in the TCA. The beta subunit provides nucleotide specificity of the enzyme and binds the substrate succinate, while the binding sites for coenzyme A and phosphate are found in the alpha subunit. This is Succinate--CoA ligase [ADP-forming] subunit beta from Afipia carboxidovorans (strain ATCC 49405 / DSM 1227 / KCTC 32145 / OM5) (Oligotropha carboxidovorans).